The sequence spans 727 residues: 1,4-alpha-glucan branching enzyme GlgB (727 aa).

The Nucleophile role is filled by D405. The active-site Proton donor is E458.

Belongs to the glycosyl hydrolase 13 family. GlgB subfamily. Monomer.

It carries out the reaction Transfers a segment of a (1-&gt;4)-alpha-D-glucan chain to a primary hydroxy group in a similar glucan chain.. It functions in the pathway glycan biosynthesis; glycogen biosynthesis. Its function is as follows. Catalyzes the formation of the alpha-1,6-glucosidic linkages in glycogen by scission of a 1,4-alpha-linked oligosaccharide from growing alpha-1,4-glucan chains and the subsequent attachment of the oligosaccharide to the alpha-1,6 position. The chain is 1,4-alpha-glucan branching enzyme GlgB from Yersinia pestis bv. Antiqua (strain Antiqua).